Consider the following 215-residue polypeptide: 16S rRNA (adenine(1408)-N(1))-methyltransferase (215 aa).

S-adenosyl-L-methionine is bound by residues G32, D55, 87–88, 102–107, and 191–193; these read AE, LMPWGS, and TSW.

Belongs to the methyltransferase superfamily. Kanamycin-apramycin resistance family.

It catalyses the reaction adenosine(1408) in 16S rRNA + S-adenosyl-L-methionine = N(1)-methyladenosine(1408) in 16S rRNA + S-adenosyl-L-homocysteine + H(+). Functionally, specifically methylates the N(1) position of adenine 1408 in 16S rRNA. Confers resistance to various aminoglycosides, including kanamycin, neomycin and apramycin. The protein is 16S rRNA (adenine(1408)-N(1))-methyltransferase (kamB) of Streptoalloteichus tenebrarius (strain ATCC 17920 / DSM 40477 / JCM 4838 / CBS 697.72 / NBRC 16177 / NCIMB 11028 / NRRL B-12390 / A12253. 1 / ISP 5477) (Streptomyces tenebrarius).